We begin with the raw amino-acid sequence, 670 residues long: Probable membrane-anchored ferredoxin csal_0991 (670 aa).

Helical transmembrane passes span 2–22 (LDIL…IGAV), 68–90 (VATA…LGLA), 94–113 (LGWL…LFVA), 135–155 (LMAF…VLPA), and 159–179 (GWLV…ELVF). 4Fe-4S ferredoxin-type domains are found at residues 241–271 (WNQL…PLNP) and 316–347 (GTAL…HVDA). Residues Cys-250, Cys-253, Cys-256, Cys-260, Cys-328, Cys-331, Cys-334, and Cys-338 each coordinate [4Fe-4S] cluster. The segment at 648–670 (NTPPATPASHDTAASQATEEVLS) is disordered. The segment covering 659–670 (TAASQATEEVLS) has biased composition (polar residues).

[4Fe-4S] cluster is required as a cofactor.

The protein resides in the cell inner membrane. In terms of biological role, participates in the electron transfer process during N,N-dimethylglycine (DMG) degradation to sarcosine. Probably transfers the electrons from N,N-dimethylglycine/sarcosine dehydrogenase (DMGDH) to the electron transfer flavoprotein (ETF) EtfA-EtfB. This Chromohalobacter salexigens (strain ATCC BAA-138 / DSM 3043 / CIP 106854 / NCIMB 13768 / 1H11) protein is Probable membrane-anchored ferredoxin csal_0991.